We begin with the raw amino-acid sequence, 521 residues long: Cytoplasmic polyadenylation element-binding protein 2 (521 aa).

A compositionally biased stretch (pro residues) spans 1 to 11; sequence MNLPQQQPPAA. 2 disordered regions span residues 1-35 and 50-88; these read MNLPQQQPPAAAPQQPQSRRSPVSPQLQQQHQAAA and PLLKQSPWSNHQNSGWGTASMSWGAMHGRDHRRSGNMGI. Positions 12–35 are enriched in low complexity; that stretch reads APQQPQSRRSPVSPQLQQQHQAAA. Phosphoserine is present on serine 21. Residues 55–70 are compositionally biased toward polar residues; sequence SPWSNHQNSGWGTASM. RRM domains lie at 264-355 and 372-454; these read RKVF…PWNL and KTIF…PYVL.

It belongs to the RRM CPEB family. In terms of assembly, interacts with TENT2/GLD2. Expressed in embryo, cerebellum, salivary gland, thymus, heart, liver, lung, spleen, kidney, intestine, ovary and round spermatids. Weakly expressed in granular cells of dentate gyrus and the pyramidal cells of CA3 and CA1 of the hippocampus.

The protein localises to the cytoplasm. In terms of biological role, may play a role in translational regulation of stored mRNAs in transcriptionally inactive haploid spermatids. Binds to poly(U) RNA oligomers. Required for cell cycle progression, specifically for the transition from metaphase to anaphase. The polypeptide is Cytoplasmic polyadenylation element-binding protein 2 (Cpeb2) (Mus musculus (Mouse)).